A 357-amino-acid polypeptide reads, in one-letter code: 3-isopropylmalate dehydrogenase (357 aa).

76–89 (GPKWDALDSNIRPE) is a binding site for NAD(+). 4 residues coordinate substrate: Arg-96, Arg-106, Arg-134, and Asp-224. Mg(2+) contacts are provided by Asp-224, Asp-248, and Asp-252. Residue 282–294 (GSAPDIAGQGVAN) coordinates NAD(+).

This sequence belongs to the isocitrate and isopropylmalate dehydrogenases family. LeuB type 1 subfamily. In terms of assembly, homodimer. The cofactor is Mg(2+). It depends on Mn(2+) as a cofactor.

The protein localises to the cytoplasm. The catalysed reaction is (2R,3S)-3-isopropylmalate + NAD(+) = 4-methyl-2-oxopentanoate + CO2 + NADH. The protein operates within amino-acid biosynthesis; L-leucine biosynthesis; L-leucine from 3-methyl-2-oxobutanoate: step 3/4. Catalyzes the oxidation of 3-carboxy-2-hydroxy-4-methylpentanoate (3-isopropylmalate) to 3-carboxy-4-methyl-2-oxopentanoate. The product decarboxylates to 4-methyl-2 oxopentanoate. The protein is 3-isopropylmalate dehydrogenase of Saccharophagus degradans (strain 2-40 / ATCC 43961 / DSM 17024).